A 206-amino-acid polypeptide reads, in one-letter code: Small ribosomal subunit protein uS4B (206 aa).

Positions 96–156 (GRLDNVVYRM…EKAKKQSRIG (61 aa)) constitute an S4 RNA-binding domain.

This sequence belongs to the universal ribosomal protein uS4 family. Part of the 30S ribosomal subunit. Contacts protein S5. The interaction surface between S4 and S5 is involved in control of translational fidelity.

Functionally, one of the primary rRNA binding proteins, it binds directly to 16S rRNA where it nucleates assembly of the body of the 30S subunit. Its function is as follows. With S5 and S12 plays an important role in translational accuracy. This chain is Small ribosomal subunit protein uS4B, found in Psychromonas ingrahamii (strain DSM 17664 / CCUG 51855 / 37).